A 258-amino-acid chain; its full sequence is uncharacterized protein (258 aa).

An N-terminal signal peptide occupies residues 1 to 19; sequence MVGILPLCCSGCVPSLCCS. 3 helical membrane passes run 94-114, 197-217, and 219-239; these read GLLLPCLLGVGSWLLFNNWTG, CLILGIFLFCFVLAVIGLPYI, and PGLSLSVALLWQSLILLSSLV.

Its subcellular location is the membrane. This is an uncharacterized protein from Homo sapiens (Human).